Reading from the N-terminus, the 475-residue chain is Ribulose bisphosphate carboxylase large chain (475 aa).

The propeptide occupies 1–2 (MS). At Pro-3 the chain carries N-acetylproline. Asn-123 and Thr-173 together coordinate substrate. The active-site Proton acceptor is the Lys-175. Residue Lys-177 participates in substrate binding. Mg(2+) is bound by residues Lys-201, Asp-203, and Glu-204. The residue at position 201 (Lys-201) is an N6-carboxylysine. His-294 (proton acceptor) is an active-site residue. Substrate contacts are provided by Arg-295, His-327, and Ser-379.

The protein belongs to the RuBisCO large chain family. Type I subfamily. In terms of assembly, heterohexadecamer of 8 large chains and 8 small chains; disulfide-linked. The disulfide link is formed within the large subunit homodimers. Mg(2+) is required as a cofactor. Post-translationally, the disulfide bond which can form in the large chain dimeric partners within the hexadecamer appears to be associated with oxidative stress and protein turnover.

It localises to the plastid. Its subcellular location is the chloroplast. It catalyses the reaction 2 (2R)-3-phosphoglycerate + 2 H(+) = D-ribulose 1,5-bisphosphate + CO2 + H2O. The catalysed reaction is D-ribulose 1,5-bisphosphate + O2 = 2-phosphoglycolate + (2R)-3-phosphoglycerate + 2 H(+). Its function is as follows. RuBisCO catalyzes two reactions: the carboxylation of D-ribulose 1,5-bisphosphate, the primary event in carbon dioxide fixation, as well as the oxidative fragmentation of the pentose substrate in the photorespiration process. Both reactions occur simultaneously and in competition at the same active site. The chain is Ribulose bisphosphate carboxylase large chain from Welwitschia mirabilis (Tree tumbo).